The primary structure comprises 332 residues: UDP-N-acetylenolpyruvoylglucosamine reductase (332 aa).

Residues isoleucine 15–arginine 184 form the FAD-binding PCMH-type domain. Arginine 160 is a catalytic residue. Serine 232 acts as the Proton donor in catalysis. Glutamate 328 is a catalytic residue.

The protein belongs to the MurB family. The cofactor is FAD.

It localises to the cytoplasm. It carries out the reaction UDP-N-acetyl-alpha-D-muramate + NADP(+) = UDP-N-acetyl-3-O-(1-carboxyvinyl)-alpha-D-glucosamine + NADPH + H(+). It participates in cell wall biogenesis; peptidoglycan biosynthesis. In terms of biological role, cell wall formation. This Bacteroides fragilis (strain YCH46) protein is UDP-N-acetylenolpyruvoylglucosamine reductase.